A 149-amino-acid polypeptide reads, in one-letter code: Cytochrome c-type biogenesis protein CcmE (149 aa).

The Cytoplasmic segment spans residues 1 to 7; that stretch reads MTRKQKR. The helical; Signal-anchor for type II membrane protein transmembrane segment at 8–28 threads the bilayer; that stretch reads LAVIAGGMGFIATAVLLVLFA. Topologically, residues 29-149 are periplasmic; it reads FSQSVAYFYM…GVWKGEEASQ (121 aa). Positions 123 and 127 each coordinate heme.

Belongs to the CcmE/CycJ family.

Its subcellular location is the cell inner membrane. Functionally, heme chaperone required for the biogenesis of c-type cytochromes. Transiently binds heme delivered by CcmC and transfers the heme to apo-cytochromes in a process facilitated by CcmF and CcmH. The chain is Cytochrome c-type biogenesis protein CcmE from Rhizobium rhizogenes (strain K84 / ATCC BAA-868) (Agrobacterium radiobacter).